Consider the following 264-residue polypeptide: Elongator complex protein 6 (264 aa).

Belongs to the ELP6 family. As to quaternary structure, component of the elongator complex.

It localises to the cytoplasm. The protein localises to the nucleus. It functions in the pathway tRNA modification; 5-methoxycarbonylmethyl-2-thiouridine-tRNA biosynthesis. In terms of biological role, component of the elongator complex which is required for multiple tRNA modifications, including mcm5U (5-methoxycarbonylmethyl uridine), mcm5s2U (5-methoxycarbonylmethyl-2-thiouridine), and ncm5U (5-carbamoylmethyl uridine). The elongator complex catalyzes formation of carboxymethyluridine in the wobble base at position 34 in tRNAs. The polypeptide is Elongator complex protein 6 (elp6) (Danio rerio (Zebrafish)).